We begin with the raw amino-acid sequence, 207 residues long: MVATCLQVVGFVTSFVGWIGIIVTTSTNDWVVTCSYTIPTCRKMDELGSKGLWADCVMATGLHHCKPLVDILILPGYAQACRALMIAASVLGLPGILLLLTVLPCIRMGHEPGVAKYRRAQLAGVLLILLALCAIVATIWFPVCAHREITIVSFGYSLYAGWIGAVMCLVGGCVIVCCSGDAQSFGENRFYYSSGSSSPTHAKSAHV.

A topological domain (cytoplasmic) is located at residue methionine 1. The helical transmembrane segment at 2–22 (VATCLQVVGFVTSFVGWIGII) threads the bilayer. Residues 23–82 (VTTSTNDWVVTCSYTIPTCRKMDELGSKGLWADCVMATGLHHCKPLVDILILPGYAQACR) lie on the Extracellular side of the membrane. The helical transmembrane segment at 83 to 103 (ALMIAASVLGLPGILLLLTVL) threads the bilayer. Over 104–122 (PCIRMGHEPGVAKYRRAQL) the chain is Cytoplasmic. A helical membrane pass occupies residues 123–143 (AGVLLILLALCAIVATIWFPV). Residues 144–157 (CAHREITIVSFGYS) are Extracellular-facing. The helical transmembrane segment at 158-178 (LYAGWIGAVMCLVGGCVIVCC) threads the bilayer. Residues 179-207 (SGDAQSFGENRFYYSSGSSSPTHAKSAHV) are Cytoplasmic-facing. Phosphoserine occurs at positions 193, 194, 197, and 198.

This sequence belongs to the claudin family. Interacts with tetraspanin-3/TSPAN3. Interacts with OCLN.

It localises to the cell junction. The protein resides in the tight junction. It is found in the cell membrane. Its function is as follows. Plays a major role in tight junction-specific obliteration of the intercellular space, through calcium-independent cell-adhesion activity. This Rattus norvegicus (Rat) protein is Claudin-11 (Cldn11).